A 320-amino-acid polypeptide reads, in one-letter code: Lipoyl synthase (320 aa).

Cys67, Cys72, Cys78, Cys93, Cys97, Cys100, and Ser307 together coordinate [4Fe-4S] cluster. Positions 79–296 (FNHGTATFMI…GVIAKEIGFT (218 aa)) constitute a Radical SAM core domain.

It belongs to the radical SAM superfamily. Lipoyl synthase family. [4Fe-4S] cluster is required as a cofactor.

It is found in the cytoplasm. The enzyme catalyses [[Fe-S] cluster scaffold protein carrying a second [4Fe-4S](2+) cluster] + N(6)-octanoyl-L-lysyl-[protein] + 2 oxidized [2Fe-2S]-[ferredoxin] + 2 S-adenosyl-L-methionine + 4 H(+) = [[Fe-S] cluster scaffold protein] + N(6)-[(R)-dihydrolipoyl]-L-lysyl-[protein] + 4 Fe(3+) + 2 hydrogen sulfide + 2 5'-deoxyadenosine + 2 L-methionine + 2 reduced [2Fe-2S]-[ferredoxin]. Its pathway is protein modification; protein lipoylation via endogenous pathway; protein N(6)-(lipoyl)lysine from octanoyl-[acyl-carrier-protein]: step 2/2. Its function is as follows. Catalyzes the radical-mediated insertion of two sulfur atoms into the C-6 and C-8 positions of the octanoyl moiety bound to the lipoyl domains of lipoate-dependent enzymes, thereby converting the octanoylated domains into lipoylated derivatives. This Pseudoalteromonas atlantica (strain T6c / ATCC BAA-1087) protein is Lipoyl synthase.